We begin with the raw amino-acid sequence, 446 residues long: Tubulin alpha-2 chain (446 aa).

The MREC motif motif lies at 1-4 (MREC). Residues Q11, E68, S137, G141, T142, S176, N203, and N225 each coordinate GTP. E68 contacts Mg(2+). Residue E251 is part of the active site.

It belongs to the tubulin family. Dimer of alpha and beta chains. A typical microtubule is a hollow water-filled tube with an outer diameter of 25 nm and an inner diameter of 15 nM. Alpha-beta heterodimers associate head-to-tail to form protofilaments running lengthwise along the microtubule wall with the beta-tubulin subunit facing the microtubule plus end conferring a structural polarity. Microtubules usually have 13 protofilaments but different protofilament numbers can be found in some organisms and specialized cells. Mg(2+) serves as cofactor. Post-translationally, some glutamate residues at the C-terminus are polyglycylated, resulting in polyglycine chains on the gamma-carboxyl group. Glycylation is mainly limited to tubulin incorporated into axonemes (cilia and flagella) whereas glutamylation is prevalent in neuronal cells, centrioles, axonemes, and the mitotic spindle. Both modifications can coexist on the same protein on adjacent residues, and lowering polyglycylation levels increases polyglutamylation, and reciprocally. The precise function of polyglycylation is still unclear. Some glutamate residues at the C-terminus are polyglutamylated, resulting in polyglutamate chains on the gamma-carboxyl group. Polyglutamylation plays a key role in microtubule severing by spastin (SPAST). SPAST preferentially recognizes and acts on microtubules decorated with short polyglutamate tails: severing activity by SPAST increases as the number of glutamates per tubulin rises from one to eight, but decreases beyond this glutamylation threshold. Testis specific.

It is found in the cytoplasm. The protein resides in the cytoskeleton. The catalysed reaction is GTP + H2O = GDP + phosphate + H(+). Its function is as follows. Tubulin is the major constituent of microtubules, a cylinder consisting of laterally associated linear protofilaments composed of alpha- and beta-tubulin heterodimers. Microtubules grow by the addition of GTP-tubulin dimers to the microtubule end, where a stabilizing cap forms. Below the cap, tubulin dimers are in GDP-bound state, owing to GTPase activity of alpha-tubulin. The chain is Tubulin alpha-2 chain from Gallus gallus (Chicken).